Reading from the N-terminus, the 391-residue chain is 1-acyl-sn-glycerol-3-phosphate acyltransferase 2 (391 aa).

Residues 3–23 form a helical membrane-spanning segment; it reads MAAAAVIVPLGILFFISGLVV. The short motif at 92–97 is the HXXXXD motif element; it reads HRSDID. 2 helical membrane passes run 306 to 326 and 334 to 354; these read LAVV…FLHW and KGIA…QILI. A disordered region spans residues 358 to 391; sequence QSERSTPAKVAPAKPKDKHQSGSSSQTEVEEKQK.

Belongs to the 1-acyl-sn-glycerol-3-phosphate acyltransferase family.

It localises to the endoplasmic reticulum membrane. The enzyme catalyses a 1-acyl-sn-glycero-3-phosphate + an acyl-CoA = a 1,2-diacyl-sn-glycero-3-phosphate + CoA. The protein operates within phospholipid metabolism; CDP-diacylglycerol biosynthesis; CDP-diacylglycerol from sn-glycerol 3-phosphate: step 2/3. Converts lysophosphatidic acid (LPA) into phosphatidic acid by incorporating acyl moiety at the 2 position. The protein is 1-acyl-sn-glycerol-3-phosphate acyltransferase 2 (LPAT2) of Brassica oleracea (Wild cabbage).